Reading from the N-terminus, the 203-residue chain is Small ribosomal subunit protein uS4 (203 aa).

One can recognise an S4 RNA-binding domain in the interval 93–173 (RRFDNVVFRA…IPSWIQVDKA (81 aa)).

It belongs to the universal ribosomal protein uS4 family. As to quaternary structure, part of the 30S ribosomal subunit. Contacts protein S5. The interaction surface between S4 and S5 is involved in control of translational fidelity.

In terms of biological role, one of the primary rRNA binding proteins, it binds directly to 16S rRNA where it nucleates assembly of the body of the 30S subunit. Functionally, with S5 and S12 plays an important role in translational accuracy. The sequence is that of Small ribosomal subunit protein uS4 from Pelodictyon phaeoclathratiforme (strain DSM 5477 / BU-1).